Consider the following 528-residue polypeptide: MTRDFKPGDLIFAKMKGYPHWPARVDEVPDGAVKPPTNKLPIFFFGTHETAFLGPKDIFPYSENKEKYGKPNKRKGFNEGLWEIDNNPKVKFSSQQASTKQSNASSDVEVEEKETNVSKEDTDQEEKASNEDVTKAVDITTPKAARRGRKRKAEKQVDTEEAGMVTAATASNVKASPKRGRPAATEVKIPKPRGRPKVVKQPCPSDGDMVIDEDKSKKKGPEEKQPKKQLKKEEEGQKEEEKPRKEPDKKEGKKEVESKRKNLAKPGVTSTSDSEDEDDQEGEKKRKGGRNFQAAHRRNMLKGQHEKEAGDRKRKQEEQMETEQQNKDEGKKPEVKKVEKKRETSMDSRLQRIHAEIKNSLKIDNLDVNRCIEALDELASLQVTMQQAQKHTEMITTLKKIRRFKVSQVIMEKSTMLYNKFKNMFLVGEGDSVITQVLNKSLAEQRQHEEANKTKDQGKKGPNKKLEKEPTGTKSLNGGSDAQESNHPQHNGDSNEDGKDSREASSKTKPPGEEREAEISLKESTLDN.

The PWWP domain maps to 7-64 (PGDLIFAKMKGYPHWPARVDEVPDGAVKPPTNKLPIFFFGTHETAFLGPKDIFPYSEN). Residues 61–348 (YSENKEKYGK…EKKRETSMDS (288 aa)) are disordered. Lys75 participates in a covalent cross-link: Glycyl lysine isopeptide (Lys-Gly) (interchain with G-Cter in SUMO2). Residues 92 to 106 (FSSQQASTKQSNASS) show a composition bias toward polar residues. Ser102, Ser105, and Ser106 each carry phosphoserine. Basic and acidic residues predominate over residues 113–135 (KETNVSKEDTDQEEKASNEDVTK). Thr115 and Thr122 each carry phosphothreonine. Ser129 is subject to Phosphoserine. Thr141 carries the post-translational modification Phosphothreonine. A compositionally biased stretch (basic residues) spans 144–153 (AARRGRKRKA). The Nuclear localization signal signature appears at 146-156 (RRGRKRKAEKQ). Residues Ser176 and Ser205 each carry the phosphoserine modification. Basic and acidic residues predominate over residues 212–260 (DEDKSKKKGPEEKQPKKQLKKEEEGQKEEEKPRKEPDKKEGKKEVESKR). Ser270 bears the Phosphoserine mark. Thr271 is modified (phosphothreonine). A phosphoserine mark is found at Ser272 and Ser274. Positions 285–300 (KRKGGRNFQAAHRRNM) are enriched in basic residues. Over residues 303-348 (GQHEKEAGDRKRKQEEQMETEQQNKDEGKKPEVKKVEKKRETSMDS) the composition is skewed to basic and acidic residues. 2 coiled-coil regions span residues 306 to 332 (EKEA…EGKK) and 369 to 393 (NRCI…KHTE). An integrase-binding domain (IBD) region spans residues 338-415 (VEKKRETSMD…VSQVIMEKST (78 aa)). Residue Ser432 is modified to Phosphoserine. Thr435 carries the phosphothreonine modification. Ser441 is subject to Phosphoserine. Positions 444-471 (EQRQHEEANKTKDQGKKGPNKKLEKEPT) are enriched in basic and acidic residues. The segment at 444–528 (EQRQHEEANK…ISLKESTLDN (85 aa)) is disordered. Residues 472-492 (GTKSLNGGSDAQESNHPQHNG) show a composition bias toward polar residues. The span at 496-528 (EDGKDSREASSKTKPPGEEREAEISLKESTLDN) shows a compositional bias: basic and acidic residues. The residue at position 515 (Arg515) is a Citrulline. Ser520 is modified (phosphoserine). Thr525 carries the post-translational modification Phosphothreonine.

Belongs to the HDGF family. As to quaternary structure, monomer. Interacts with IFRD1/PC4. Interacts (via IBD domain) with POGZ (via IBM motif) and CDCA7L (via IBM motifs). Interacts (via IBD domain) with KMT2A (via IBM motifs) with a moderate affinity whereas interacts with the KMT2A-MEN1 complex with a greater affinity; MEN1 enhances interaction of KMT2A with PSIP1. Interacts (via IBD domain) with IWS1 (via IBM motif), MED1 (via IBM motif) and DBF4 (via IBM motifs). Citrullinated by PADI4.

Its subcellular location is the nucleus. Functionally, transcriptional coactivator involved in neuroepithelial stem cell differentiation and neurogenesis. Involved in particular in lens epithelial cell gene regulation and stress responses. May play an important role in lens epithelial to fiber cell terminal differentiation. May play a protective role during stress-induced apoptosis. This is PC4 and SFRS1-interacting protein (Psip1) from Mus musculus (Mouse).